Here is a 190-residue protein sequence, read N- to C-terminus: Elongation factor P 2 (190 aa).

It belongs to the elongation factor P family.

The protein localises to the cytoplasm. Its pathway is protein biosynthesis; polypeptide chain elongation. Its function is as follows. Involved in peptide bond synthesis. Stimulates efficient translation and peptide-bond synthesis on native or reconstituted 70S ribosomes in vitro. Probably functions indirectly by altering the affinity of the ribosome for aminoacyl-tRNA, thus increasing their reactivity as acceptors for peptidyl transferase. This chain is Elongation factor P 2 (efp2), found in Chlamydia pneumoniae (Chlamydophila pneumoniae).